The primary structure comprises 1158 residues: ATP-dependent helicase/deoxyribonuclease subunit B (1158 aa).

8–15 (GRAGTGKS) is a binding site for ATP. Residues Cys-791, Cys-1112, Cys-1115, and Cys-1121 each coordinate [4Fe-4S] cluster.

The protein belongs to the helicase family. AddB/RexB type 1 subfamily. Heterodimer of AddA and AddB. The cofactor is Mg(2+). [4Fe-4S] cluster is required as a cofactor.

In terms of biological role, the heterodimer acts as both an ATP-dependent DNA helicase and an ATP-dependent, dual-direction single-stranded exonuclease. Recognizes the chi site generating a DNA molecule suitable for the initiation of homologous recombination. The AddB subunit has 5' -&gt; 3' nuclease activity but not helicase activity. In Clostridium perfringens (strain SM101 / Type A), this protein is ATP-dependent helicase/deoxyribonuclease subunit B.